We begin with the raw amino-acid sequence, 324 residues long: E3 ubiquitin-protein ligase SIAH2 (324 aa).

A compositionally biased stretch (polar residues) spans methionine 1–cysteine 15. Residues methionine 1–glycine 42 form a disordered region. Serine 6 is subject to Phosphoserine. Position 16 is a phosphoserine; by DYRK2 (serine 16). Pro residues predominate over residues lysine 17–proline 32. Threonine 26 carries the phosphothreonine; by DYRK2 modification. Position 28 is a phosphoserine; by DYRK2 and MAPK14 (serine 28). Residues proline 33 to glycine 42 show a composition bias toward low complexity. Serine 68 carries the post-translational modification Phosphoserine; by DYRK2. The RING-type zinc finger occupies cysteine 80–arginine 115. At threonine 119 the chain carries Phosphothreonine; by DYRK2. The SBD stretch occupies residues valine 130–cysteine 322. Residues alanine 133 to lysine 193 form an SIAH-type zinc finger. Zn(2+) is bound by residues cysteine 138, cysteine 145, histidine 157, cysteine 161, cysteine 168, cysteine 175, histidine 187, and histidine 192.

It belongs to the SINA (Seven in absentia) family. Homodimer. Interacts with UBE2E2. Interacts with PEG3. Interacts with VAV1, without mediating its ubiquitin-mediated degradation. Interacts with CACYBP/SIP. Probable component of some large E3 complex possibly composed of UBE2D1, SIAH2, CACYBP/SIP, SKP1, APC and TBL1X. Interacts with PEG10, which may inhibit its activity. Interacts with EGLN2 and SNCAIP. Interacts with DYRK2. Interacts with NR1D1 and NR1D2. Interacts with DCC. Interacts with AXIN1. Post-translationally, phosphorylated at Ser-28 by MAPK14, which mediates the degradation by the proteasome of EGLN3. Phosphorylated at Ser-28 by DYRK2; this increases the ubiquitin ligase activity and promotes degradation of EGLN3. As to expression, widely expressed at low level.

It localises to the cytoplasm. The protein resides in the nucleus. It carries out the reaction S-ubiquitinyl-[E2 ubiquitin-conjugating enzyme]-L-cysteine + [acceptor protein]-L-lysine = [E2 ubiquitin-conjugating enzyme]-L-cysteine + N(6)-ubiquitinyl-[acceptor protein]-L-lysine.. It functions in the pathway protein modification; protein ubiquitination. Its activity is regulated as follows. Inhibited by interaction with SNCAIP (isoform 2, but not isoform 1). May be inhibited by interaction with PEG10. Functionally, E3 ubiquitin-protein ligase that mediates ubiquitination and subsequent proteasomal degradation of target proteins. E3 ubiquitin ligases accept ubiquitin from an E2 ubiquitin-conjugating enzyme in the form of a thioester and then directly transfers the ubiquitin to targeted substrates. Mediates E3 ubiquitin ligase activity either through direct binding to substrates or by functioning as the essential RING domain subunit of larger E3 complexes. Triggers the ubiquitin-mediated degradation of many substrates, including proteins involved in transcription regulation (GPS2, POU2AF1, PML, NCOR1), a cell surface receptor (DCC), an antiapoptotic protein (BAG1), and a protein involved in synaptic vesicle function in neurons (SYP). Mediates ubiquitination and proteasomal degradation of DYRK2 in response to hypoxia. It is thereby involved in apoptosis, tumor suppression, cell cycle, transcription and signaling processes. Has some overlapping function with SIAH1. Triggers the ubiquitin-mediated degradation of TRAF2, whereas SIAH1 does not. Promotes monoubiquitination of SNCA. Regulates cellular clock function via ubiquitination of the circadian transcriptional repressors NR1D1 and NR1D2 leading to their proteasomal degradation. Plays an important role in mediating the rhythmic degradation/clearance of NR1D1 and NR1D2 contributing to their circadian profile of protein abundance. Mediates ubiquitination and degradation of EGLN2 and EGLN3 in response to the unfolded protein response (UPR), leading to their degradation and subsequent stabilization of ATF4. Also part of the Wnt signaling pathway in which it mediates the Wnt-induced ubiquitin-mediated proteasomal degradation of AXIN1. This Homo sapiens (Human) protein is E3 ubiquitin-protein ligase SIAH2 (SIAH2).